A 192-amino-acid chain; its full sequence is Succinate dehydrogenase cytochrome b560 subunit, mitochondrial (192 aa).

Residues 1-27 (MFGRTLNTFTSRNAPLVRNFDKFIVNN) constitute a mitochondrion transit peptide. Residues 48–83 (YSTQAKKPFTITEKRIDELKTPYQPTSPHLTIYKFP) lie on the Mitochondrial matrix side of the membrane. The chain crosses the membrane as a helical span at residues 84–113 (LPAVMSIMHRATGICLALGITGLAGVTLFA). At 114–131 (PHDAIHYIQLLHTQYPAL) the chain is on the mitochondrial intermembrane side. Residues 132–156 (VYPAKFAVALPLTYHFCTGVRHIIW) form a helical membrane-spanning segment. Histidine 146 lines the heme b pocket. The Mitochondrial matrix segment spans residues 157–164 (DETVKGLS). A helical membrane pass occupies residues 165–186 (ISQIESSGKVLLAVVAVLSTIF). At 187–189 (TFV) the chain is on the mitochondrial intermembrane side.

This sequence belongs to the cytochrome b560 family. In terms of assembly, component of complex II composed of four subunits: the flavoprotein (FP) sdha, iron-sulfur protein (IP) sdhb, and a cytochrome b560 composed of sdhc and sdhd. Heme b serves as cofactor.

The protein localises to the mitochondrion inner membrane. It participates in carbohydrate metabolism; tricarboxylic acid cycle. Membrane-anchoring subunit of succinate dehydrogenase (SDH) that is involved in complex II of the mitochondrial electron transport chain and is responsible for transferring electrons from succinate to ubiquinone (coenzyme Q). The chain is Succinate dehydrogenase cytochrome b560 subunit, mitochondrial (sdhC) from Dictyostelium discoideum (Social amoeba).